We begin with the raw amino-acid sequence, 145 residues long: 3-hydroxyacyl-[acyl-carrier-protein] dehydratase FabZ (145 aa).

Residue histidine 47 is part of the active site.

Belongs to the thioester dehydratase family. FabZ subfamily.

Its subcellular location is the cytoplasm. The catalysed reaction is a (3R)-hydroxyacyl-[ACP] = a (2E)-enoyl-[ACP] + H2O. Involved in unsaturated fatty acids biosynthesis. Catalyzes the dehydration of short chain beta-hydroxyacyl-ACPs and long chain saturated and unsaturated beta-hydroxyacyl-ACPs. This Polaromonas sp. (strain JS666 / ATCC BAA-500) protein is 3-hydroxyacyl-[acyl-carrier-protein] dehydratase FabZ.